The sequence spans 529 residues: Calcium/calmodulin-dependent protein kinase type II subunit gamma (529 aa).

One can recognise a Protein kinase domain in the interval 14–272 (YQLFEELGKG…ADQALKHPWV (259 aa)). ATP is bound by residues 20–28 (LGKGAFSVV) and K43. D136 acts as the Proton acceptor in catalysis. The interval 283–292 (HRQETVECLR) is autoinhibitory domain. Residues T287, T306, and T307 each carry the phosphothreonine; by autocatalysis modification. Positions 294-316 (FNARRKLKGAILTTMLVSRNFSA) are calmodulin-binding. Residues S311, S334, S349, S352, and S455 each carry the phosphoserine modification. A disordered region spans residues 324–353 (KSDGGVKKRKSSSSVHLMPQSNNKNSLVSP). Residues 342 to 352 (PQSNNKNSLVS) show a composition bias toward polar residues.

The protein belongs to the protein kinase superfamily. CAMK Ser/Thr protein kinase family. CaMK subfamily. As to quaternary structure, CAMK2 is composed of 4 different chains: alpha (CAMK2A), beta (CAMK2B), gamma (CAMK2G), and delta (CAMK2D). The different isoforms assemble into homo- or heteromultimeric holoenzymes composed of 12 subunits with two hexameric rings stacked one on top of the other. In terms of processing, autophosphorylation of Thr-287 following activation by Ca(2+)/calmodulin. Phosphorylation of Thr-287 locks the kinase into an activated state.

The protein resides in the sarcoplasmic reticulum membrane. The catalysed reaction is L-seryl-[protein] + ATP = O-phospho-L-seryl-[protein] + ADP + H(+). It catalyses the reaction L-threonyl-[protein] + ATP = O-phospho-L-threonyl-[protein] + ADP + H(+). With respect to regulation, activated by Ca(2+)/calmodulin. Binding of calmodulin results in conformational change that relieves intrasteric autoinhibition and allows autophosphorylation of Thr-287 which turns the kinase in a constitutively active form and confers to the kinase a Ca(2+)-independent activity. Functionally, calcium/calmodulin-dependent protein kinase that functions autonomously after Ca(2+)/calmodulin-binding and autophosphorylation, and is involved in sarcoplasmic reticulum Ca(2+) transport in skeletal muscle and may function in dendritic spine and synapse formation and neuronal plasticity. In slow-twitch muscles, is involved in regulation of sarcoplasmic reticulum (SR) Ca(2+) transport and in fast-twitch muscle participates in the control of Ca(2+) release from the SR through phosphorylation of the ryanodine receptor-coupling factor triadin. In the central nervous system, it is involved in the regulation of neurite formation and arborization. It may participate in the promotion of dendritic spine and synapse formation and maintenance of synaptic plasticity which enables long-term potentiation (LTP) and hippocampus-dependent learning. In response to interferon-gamma (IFN-gamma) stimulation, catalyzes phosphorylation of STAT1, stimulating the JAK-STAT signaling pathway. The polypeptide is Calcium/calmodulin-dependent protein kinase type II subunit gamma (Camk2g) (Mus musculus (Mouse)).